Here is a 365-residue protein sequence, read N- to C-terminus: Solute carrier family 35 member G1 (365 aa).

The disordered stretch occupies residues 1–33; that stretch reads MRPQDSTGVAELQEPGLPLTDDAPPGATEEPAA. Residues 23–33 show a composition bias toward low complexity; it reads APPGATEEPAA. Helical transmembrane passes span 69 to 89, 97 to 117, 131 to 151, 156 to 176, 187 to 207, 222 to 242, 252 to 272, 286 to 306, 311 to 333, and 338 to 357; these read GLGL…SLFV, AVEI…PCLI, IFLI…YYAY, LADA…FAWI, ALFT…PFLF, LKGT…LVIL, FLSI…ILSV, LFLI…TKAL, AGPV…IIFF, and TWWT…GAAI. EamA domains lie at 80 to 202 and 233 to 357; these read FLFS…LIVR and VFAA…GAAI.

The protein belongs to the TMEM20 family. Interacts with STIM1; stimulated by depletion of intracellular calcium. Interacts with ORAI1. Interacts with the plasma membrane calcium-transporting ATPases ATP2B1 and ATP2B4. Interacts with ATP1A1, ATP2A2, KPNB1 and XPO1. In terms of tissue distribution, ubiquitously expressed.

The protein localises to the cell membrane. Its subcellular location is the endoplasmic reticulum membrane. Functionally, may play a role in intracellular calcium sensing and homeostasis. May act as a negative regulator of plasma membrane calcium-transporting ATPases preventing calcium efflux from the cell. The chain is Solute carrier family 35 member G1 (SLC35G1) from Homo sapiens (Human).